Consider the following 328-residue polypeptide: Carbonic anhydrase-related protein 11 (328 aa).

The signal sequence occupies residues 1 to 23 (MGGAARLSAPQALVLWAALGAAA). The Alpha-carbonic anhydrase domain occupies 33–303 (DWWSYKENLQ…LAHRALRGNR (271 aa)). Asn-118 is a glycosylation site (N-linked (GlcNAc...) asparagine). The segment at 300–328 (RGNRDPRHPERRCRGPNYRLHVDGGPHGR) is disordered. Residues 319 to 328 (LHVDGGPHGR) are compositionally biased toward basic and acidic residues.

Belongs to the alpha-carbonic anhydrase family.

The protein localises to the secreted. Does not have a catalytic activity. This Mus musculus (Mouse) protein is Carbonic anhydrase-related protein 11 (Ca11).